The primary structure comprises 427 residues: Aspartate aminotransferase, mitochondrial (427 aa).

The N-terminal 26 residues, 1–26, are a transit peptide targeting the mitochondrion; the sequence is MALLKSRLLVGVARCQPCLAAVQGRA. Substrate contacts are provided by Gly-62, Trp-159, and Asn-212. Lys-276 carries the post-translational modification N6-(pyridoxal phosphate)lysine. Arg-404 is a substrate binding site.

The protein belongs to the class-I pyridoxal-phosphate-dependent aminotransferase family. As to quaternary structure, homodimer. It depends on pyridoxal 5'-phosphate as a cofactor.

The protein localises to the mitochondrion matrix. It carries out the reaction L-aspartate + 2-oxoglutarate = oxaloacetate + L-glutamate. It catalyses the reaction L-kynurenine + 2-oxoglutarate = kynurenate + L-glutamate + H2O. Catalyzes the irreversible transamination of the L-tryptophan metabolite L-kynurenine to form kynurenic acid (KA). As a member of the malate-aspartate shuttle, it has a key role in the intracellular NAD(H) redox balance. Is important for metabolite exchange between mitochondria and cytosol, and for amino acid metabolism. The polypeptide is Aspartate aminotransferase, mitochondrial (got2) (Xenopus tropicalis (Western clawed frog)).